Consider the following 152-residue polypeptide: Small ribosomal subunit protein uS13 (152 aa).

Serine 2 bears the N-acetylserine mark. Lysine 91 is covalently cross-linked (Glycyl lysine isopeptide (Lys-Gly) (interchain with G-Cter in SUMO2)). N6-acetyllysine; alternate is present on residues lysine 94 and lysine 106. Residues lysine 94 and lysine 106 each participate in a glycyl lysine isopeptide (Lys-Gly) (interchain with G-Cter in SUMO2); alternate cross-link.

It belongs to the universal ribosomal protein uS13 family. In terms of assembly, component of the small ribosomal subunit.

It is found in the cytoplasm. Functionally, component of the small ribosomal subunit. The ribosome is a large ribonucleoprotein complex responsible for the synthesis of proteins in the cell. This chain is Small ribosomal subunit protein uS13 (RPS18), found in Homo sapiens (Human).